The primary structure comprises 609 residues: Hemagglutinin/proteinase (609 aa).

An N-terminal signal peptide occupies residues 1–24; that stretch reads MKMIQRPLNWLVLAGAATGFPLYA. Positions 25 to 196 are excised as a propeptide; the sequence is AQMVTIDDAS…LDQWDGINHA (172 aa). A Zn(2+)-binding site is contributed by His-343. Glu-344 is a catalytic residue. Positions 347 and 367 each coordinate Zn(2+). Residue His-426 is the Proton donor of the active site.

It belongs to the peptidase M4 family. Zn(2+) is required as a cofactor.

It is found in the secreted. Its function is as follows. May play a role in the pathogenesis of cholera. Hap nicks and activates the A subunit of cholera enterotoxin and related enterotoxins. The polypeptide is Hemagglutinin/proteinase (hap) (Vibrio cholerae serotype O1 (strain ATCC 39315 / El Tor Inaba N16961)).